A 622-amino-acid chain; its full sequence is Mitochondrial distribution and morphology protein 34 (622 aa).

One can recognise an SMP-LTD domain in the interval 1-195; it reads MAFNFNWSPL…LPAIIHRLSL (195 aa). Disordered regions lie at residues 211-234, 303-322, 355-432, 445-464, 482-546, and 581-622; these read QVTN…DPVD, PSGL…SHVA, SMGA…IRQP, ERNA…PASR, SLQQ…QTHL, and KMGG…AYRH. The segment covering 214–225 has biased composition (low complexity); sequence NPPLEGPGLDPL. Residues 360–372 are compositionally biased toward basic residues; the sequence is RHSKAHARKRKKR. The segment covering 373 to 384 has biased composition (basic and acidic residues); sequence VVDLRRRPKNTD. Over residues 388 to 404 the composition is skewed to low complexity; the sequence is SVSGESEFTESTSAASV. Polar residues-rich tracts occupy residues 482–495 and 522–532; these read SLQQ…SKSL and NASNYTSSGDS. 2 stretches are compositionally biased toward low complexity: residues 533–543 and 592–601; these read QQQQQQQQQHQ and NNKNDNKNNN.

Belongs to the MDM34 family. In terms of assembly, component of the ER-mitochondria encounter structure (ERMES) or MDM complex, composed of MMM1, MDM10, MDM12 and MDM34.

It is found in the mitochondrion outer membrane. Functionally, component of the ERMES/MDM complex, which serves as a molecular tether to connect the endoplasmic reticulum (ER) and mitochondria. Components of this complex are involved in the control of mitochondrial shape and protein biogenesis, and function in nonvesicular lipid trafficking between the ER and mitochondria. MDM34 is required for the interaction of the ER-resident membrane protein MMM1 and the outer mitochondrial membrane-resident beta-barrel protein MDM10. The protein is Mitochondrial distribution and morphology protein 34 of Ajellomyces capsulatus (strain G186AR / H82 / ATCC MYA-2454 / RMSCC 2432) (Darling's disease fungus).